Here is a 397-residue protein sequence, read N- to C-terminus: Acetate kinase (397 aa).

Asparagine 8 lines the Mg(2+) pocket. Lysine 15 serves as a coordination point for ATP. Residue arginine 89 participates in substrate binding. Residue aspartate 146 is the Proton donor/acceptor of the active site. Residues 206 to 210 (HLGNG), 281 to 283 (DLR), and 329 to 333 (GVGEN) each bind ATP. Glutamate 382 contacts Mg(2+).

This sequence belongs to the acetokinase family. Homodimer. The cofactor is Mg(2+). Mn(2+) is required as a cofactor.

It is found in the cytoplasm. The enzyme catalyses acetate + ATP = acetyl phosphate + ADP. It functions in the pathway metabolic intermediate biosynthesis; acetyl-CoA biosynthesis; acetyl-CoA from acetate: step 1/2. Functionally, catalyzes the formation of acetyl phosphate from acetate and ATP. Can also catalyze the reverse reaction. This is Acetate kinase from Bacillus cereus (strain ATCC 14579 / DSM 31 / CCUG 7414 / JCM 2152 / NBRC 15305 / NCIMB 9373 / NCTC 2599 / NRRL B-3711).